A 194-amino-acid polypeptide reads, in one-letter code: MPKVGMREIRRAQLIDATLRSIDEAGLPGTTLASVAQRANISTGIVSHYFGDKDGLLEATMRHVLRDLWSATTHRRVAARKDPRSRLRAIVAANFDDTQVSAPVMKTWLAFWSQSMHDPMLKRLQHVNTRRLHSNLCAEFAKALPRTQAREAASGLAALIDGLWLRGALAGGPIDTRAALKLAHDYIDLLLASD.

One can recognise an HTH tetR-type domain in the interval 8–68 (EIRRAQLIDA…ATMRHVLRDL (61 aa)). The segment at residues 31-50 (TLASVAQRANISTGIVSHYF) is a DNA-binding region (H-T-H motif).

It functions in the pathway amine and polyamine biosynthesis; betaine biosynthesis via choline pathway [regulation]. Its function is as follows. Repressor involved in the biosynthesis of the osmoprotectant glycine betaine. It represses transcription of the choline transporter BetT and the genes of BetAB involved in the synthesis of glycine betaine. The sequence is that of HTH-type transcriptional regulator BetI from Burkholderia lata (strain ATCC 17760 / DSM 23089 / LMG 22485 / NCIMB 9086 / R18194 / 383).